The following is a 363-amino-acid chain: Early boundary activity protein 1 (363 aa).

Residues 155–168 are compositionally biased toward basic and acidic residues; sequence MDQEPEHKQSHEQD. The interval 155-242 is disordered; it reads MDQEPEHKQS…NAKRRCPGFE (88 aa). Acidic residues predominate over residues 198 to 209; it reads EDLGLDDDDEDY. The 100-residue stretch at 255 to 354 folds into the BEN domain; that stretch reads GPNGTEVSRI…TKCADENKML (100 aa).

The heterotrimeric Elba complex consists of Elba1, Elba2 and Elba3.

Its subcellular location is the nucleus. In terms of biological role, the heterotrimeric Elba complex is required for chromatin domain boundary function during early embryogenesis. It binds to a 8-bp sequence 5'-CCAATAAG-3' in the Fab-7 insulator or boundary element in the bithorax complex and contributes to its insulator or boundary activity. Elba1 may act as a transcriptional repressor and binds the palindromic sequence 5'-CCAATTGG-3' to mediate transcriptional repression. The protein is Early boundary activity protein 1 of Drosophila melanogaster (Fruit fly).